The chain runs to 243 residues: MRPLLALLLLGLASGSPPLDDNKIPSLCPGQPGLPGTPGHHGSQGLPGRDGRDGRDGAPGAPGEKGEGGRPGLPGPRGEPGPRGEAGPVGAIGPAGECSVPPRSAFSAKRSESRVPPPADTPLPFDRVLLNEQGHYDATTGKFTCQVPGVYYFAVHATVYRASLQFDLVKNGQSIASFFQFFGGWPKPASLSGGAMVRLEPEDQVWVQVGVGDYIGIYASIKTDSTFSGFLVYSDWHSSPVFA.

The first 15 residues, 1–15 (MRPLLALLLLGLASG), serve as a signal peptide directing secretion. The segment at 15–124 (GSPPLDDNKI…VPPPADTPLP (110 aa)) is disordered. In terms of domain architecture, Collagen-like spans 30–95 (GQPGLPGTPG…AGPVGAIGPA (66 aa)). In terms of domain architecture, C1q spans 99–238 (SVPPRSAFSA…GFLVYSDWHS (140 aa)).

In terms of assembly, homotrimer (via collagen-like domain). May form higher order oligomers by supercoiling of the trimers. May interact with ERFE.

It localises to the secreted. This is Complement C1q tumor necrosis factor-related protein 5 (C1qtnf5) from Rattus norvegicus (Rat).